The sequence spans 399 residues: Glutamine synthetase 1, mitochondrial (399 aa).

A mitochondrion-targeting transit peptide spans 1–27; the sequence is MALRVAGLFLKKELVAPATQQLRLLRT. In terms of domain architecture, GS beta-grasp spans 62 to 143; it reads VQATYLWIDG…VLCDTYSADG (82 aa). The 250-residue stretch at 150 to 399 folds into the GS catalytic domain; that stretch reads KRAAFQAAID…AIVRTCLLNE (250 aa).

It belongs to the glutamine synthetase family. In terms of assembly, homooctamer.

It is found in the mitochondrion. It carries out the reaction L-glutamate + NH4(+) + ATP = L-glutamine + ADP + phosphate + H(+). This is Glutamine synthetase 1, mitochondrial (Gs1) from Drosophila melanogaster (Fruit fly).